The following is a 269-amino-acid chain: Protein BASIC PENTACYSTEINE3 (269 aa).

Belongs to the BBR/BPC family. As to expression, expressed in seedlings, leaves and pistils. Detected in the base of flowers and tips of carpels, in petal vasculature, in anthers, in young rosette, in the lateral and primary roots, and in the gynobasal portion of the ovule.

Its subcellular location is the nucleus. In terms of biological role, transcriptional regulator that specifically binds to GA-rich elements (GAGA-repeats) present in regulatory sequences of genes involved in developmental processes. This is Protein BASIC PENTACYSTEINE3 (BPC3) from Arabidopsis thaliana (Mouse-ear cress).